We begin with the raw amino-acid sequence, 142 residues long: HTH-type transcriptional regulator MntR (142 aa).

One can recognise an HTH dtxR-type domain in the interval 1–63 (MPTPSMEDYI…YEKYRGLILT (63 aa)). Positions 8, 11, 77, 99, 102, and 103 each coordinate Mn(2+).

Belongs to the DtxR/MntR family. In terms of assembly, homodimer.

The protein localises to the cytoplasm. With respect to regulation, DNA binding is strongly activated by Mn(2+). In terms of biological role, central regulator of manganese homeostasis. This is HTH-type transcriptional regulator MntR from Listeria monocytogenes serotype 4b (strain F2365).